Consider the following 195-residue polypeptide: MLHKILFLICLASFIPTIGSISGTKDVKSKNCDGSAGLTCTFPGDCRIGDTVKVNCTSRKGCPNPVSRNNVEAVCRFCWQLLPGDYDCEPATNCSTSSTKLLVTKCSAHSSVICMGQRNFYKRIPCNWSSGYSWTKTMILSVVLGGFGADRFYLGLWKSAIGKLFSFGGLGVWTLVDVVLIAVGYIKPYDGSMYI.

A signal peptide spans 1-20 (MLHKILFLICLASFIPTIGS). Residues 21–136 (ISGTKDVKSK…NWSSGYSWTK (116 aa)) lie on the Extracellular side of the membrane. N-linked (GlcNAc...) asparagine glycans are attached at residues Asn-55, Asn-93, and Asn-127. The TM2 domain maps to 131–179 (GYSWTKTMILSVVLGGFGADRFYLGLWKSAIGKLFSFGGLGVWTLVDVV). Residues 137-157 (TMILSVVLGGFGADRFYLGLW) form a helical membrane-spanning segment. Over 158–163 (KSAIGK) the chain is Cytoplasmic. Residues 164 to 184 (LFSFGGLGVWTLVDVVLIAVG) traverse the membrane as a helical segment. Residues 185 to 195 (YIKPYDGSMYI) lie on the Extracellular side of the membrane.

The protein belongs to the TM2 family.

It localises to the membrane. This Caenorhabditis elegans protein is TM2 domain-containing protein C41D11.9.